The chain runs to 122 residues: Holo-[acyl-carrier-protein] synthase (122 aa).

Residues Asp9 and Glu58 each contribute to the Mg(2+) site.

It belongs to the P-Pant transferase superfamily. AcpS family. The cofactor is Mg(2+).

The protein localises to the cytoplasm. It carries out the reaction apo-[ACP] + CoA = holo-[ACP] + adenosine 3',5'-bisphosphate + H(+). Transfers the 4'-phosphopantetheine moiety from coenzyme A to a Ser of acyl-carrier-protein. In Chlamydia pneumoniae (Chlamydophila pneumoniae), this protein is Holo-[acyl-carrier-protein] synthase.